The sequence spans 209 residues: Large ribosomal subunit protein uL3 (209 aa).

Gln150 bears the N5-methylglutamine mark.

This sequence belongs to the universal ribosomal protein uL3 family. In terms of assembly, part of the 50S ribosomal subunit. Forms a cluster with proteins L14 and L19. Post-translationally, methylated by PrmB.

One of the primary rRNA binding proteins, it binds directly near the 3'-end of the 23S rRNA, where it nucleates assembly of the 50S subunit. The polypeptide is Large ribosomal subunit protein uL3 (Vibrio parahaemolyticus serotype O3:K6 (strain RIMD 2210633)).